The primary structure comprises 129 residues: Thylakoid-associated single-stranded DNA-binding protein slr1034 (129 aa).

Residues 1 to 100 (MNSFVLMATV…LTASRISLVD (100 aa)) form the SSB domain. Residues 99 to 129 (VDSGNGINPGELSSPPEPEAVDLSNTDDIPF) are disordered.

Homotetramer.

It localises to the cellular thylakoid membrane. The sequence is that of Thylakoid-associated single-stranded DNA-binding protein slr1034 from Synechocystis sp. (strain ATCC 27184 / PCC 6803 / Kazusa).